The primary structure comprises 369 residues: Protein phosphatase 1 regulatory inhibitor subunit PPP1R8 homolog (369 aa).

The segment covering 1–11 (MYGRSGLDRFK) has biased composition (basic and acidic residues). The interval 1 to 26 (MYGRSGLDRFKKSQTSEPFSVSANPP) is disordered. Positions 13 to 23 (SQTSEPFSVSA) are enriched in polar residues. One can recognise an FHA domain in the interval 87–138 (HIFGRQHQTCDFVLDHQSVSRQHAAVVPHKNGSIFVIDLGSAHGTFVANERL). The segment at 345–369 (VSQPAAETECGGVGEEDDNDDLFGD) is disordered. A compositionally biased stretch (acidic residues) spans 358-369 (GEEDDNDDLFGD).

In terms of assembly, interacts with human protein phosphatase PPP1C.

In terms of biological role, inhibitor of protein-phosphatase 1 (PP1). Binds to and inhibits PP1 activity. The protein is Protein phosphatase 1 regulatory inhibitor subunit PPP1R8 homolog of Arabidopsis thaliana (Mouse-ear cress).